The chain runs to 460 residues: Armadillo repeat-containing protein LFR (460 aa).

Residues 1–30 form a disordered region; the sequence is MQKRELGKSGGNSGGSSGPPAKRGRPFGST. A compositionally biased stretch (gly residues) spans 8–17; sequence KSGGNSGGSS. 3 ARM repeats span residues 227–269, 323–362, and 366–407; these read DNEV…NLAH, NEPF…NLVE, and DCRL…NLVS.

Interacts with AS2. As to expression, expressed in roots, leaves, stems and flowers.

It is found in the nucleus. Its function is as follows. Involved in leaf and flower development. Plays roles in leaf development partly by associating with AS2 and repressing KNAT1/BP transcription. Required for the formation of anther cell layers and normal expression of genes that regulates anther development. This chain is Armadillo repeat-containing protein LFR, found in Arabidopsis thaliana (Mouse-ear cress).